A 553-amino-acid chain; its full sequence is ATP synthase subunit alpha (553 aa).

173–180 is an ATP binding site; it reads GDRQTGKT. The disordered stretch occupies residues 527 to 553; sequence EALDPSAVEREEIAVHHRKPSDETAGH. The span at 533-553 shows a compositional bias: basic and acidic residues; the sequence is AVEREEIAVHHRKPSDETAGH.

The protein belongs to the ATPase alpha/beta chains family. In terms of assembly, F-type ATPases have 2 components, CF(1) - the catalytic core - and CF(0) - the membrane proton channel. CF(1) has five subunits: alpha(3), beta(3), gamma(1), delta(1), epsilon(1). CF(0) has three main subunits: a(1), b(2) and c(9-12). The alpha and beta chains form an alternating ring which encloses part of the gamma chain. CF(1) is attached to CF(0) by a central stalk formed by the gamma and epsilon chains, while a peripheral stalk is formed by the delta and b chains.

It localises to the cell membrane. It catalyses the reaction ATP + H2O + 4 H(+)(in) = ADP + phosphate + 5 H(+)(out). Functionally, produces ATP from ADP in the presence of a proton gradient across the membrane. The alpha chain is a regulatory subunit. The polypeptide is ATP synthase subunit alpha (Parafrankia sp. (strain EAN1pec)).